The following is a 468-amino-acid chain: ATP synthase subunit beta (468 aa).

Residue 150–157 coordinates ATP; the sequence is GGAGVGKT.

This sequence belongs to the ATPase alpha/beta chains family. F-type ATPases have 2 components, CF(1) - the catalytic core - and CF(0) - the membrane proton channel. CF(1) has five subunits: alpha(3), beta(3), gamma(1), delta(1), epsilon(1). CF(0) has three main subunits: a(1), b(2) and c(9-12). The alpha and beta chains form an alternating ring which encloses part of the gamma chain. CF(1) is attached to CF(0) by a central stalk formed by the gamma and epsilon chains, while a peripheral stalk is formed by the delta and b chains.

It is found in the cell inner membrane. The enzyme catalyses ATP + H2O + 4 H(+)(in) = ADP + phosphate + 5 H(+)(out). Functionally, produces ATP from ADP in the presence of a proton gradient across the membrane. The catalytic sites are hosted primarily by the beta subunits. The chain is ATP synthase subunit beta from Acidovorax ebreus (strain TPSY) (Diaphorobacter sp. (strain TPSY)).